The chain runs to 438 residues: 23S rRNA (uracil(1939)-C(5))-methyltransferase RlmD (438 aa).

The 60-residue stretch at 10–69 (KASVNTKHLSVDVVRLDHNGAGIAFVDKKPVFIEGALPGEKAIIQFIEQKKQFSRAKLIK) folds into the TRAM domain. [4Fe-4S] cluster is bound by residues Cys-82, Cys-88, Cys-91, and Cys-169. Positions 272, 301, 306, 322, 349, and 370 each coordinate S-adenosyl-L-methionine. The active-site Nucleophile is the Cys-396.

The protein belongs to the class I-like SAM-binding methyltransferase superfamily. RNA M5U methyltransferase family. RlmD subfamily.

It catalyses the reaction uridine(1939) in 23S rRNA + S-adenosyl-L-methionine = 5-methyluridine(1939) in 23S rRNA + S-adenosyl-L-homocysteine + H(+). In terms of biological role, catalyzes the formation of 5-methyl-uridine at position 1939 (m5U1939) in 23S rRNA. The sequence is that of 23S rRNA (uracil(1939)-C(5))-methyltransferase RlmD from Aliivibrio fischeri (strain MJ11) (Vibrio fischeri).